The chain runs to 121 residues: Ribonuclease P protein component (121 aa).

The protein belongs to the RnpA family. As to quaternary structure, consists of a catalytic RNA component (M1 or rnpB) and a protein subunit.

The enzyme catalyses Endonucleolytic cleavage of RNA, removing 5'-extranucleotides from tRNA precursor.. RNaseP catalyzes the removal of the 5'-leader sequence from pre-tRNA to produce the mature 5'-terminus. It can also cleave other RNA substrates such as 4.5S RNA. The protein component plays an auxiliary but essential role in vivo by binding to the 5'-leader sequence and broadening the substrate specificity of the ribozyme. The polypeptide is Ribonuclease P protein component (Oceanobacillus iheyensis (strain DSM 14371 / CIP 107618 / JCM 11309 / KCTC 3954 / HTE831)).